A 276-amino-acid chain; its full sequence is Large ribosomal subunit protein uL2 (276 aa).

Residues 224–276 are disordered; the sequence is VMNPVDHPHGGGEGKAPIGRKSPMTPWGKPTLGYKTRKKKNKSDKFIIRRRKK. Residues 258–276 are compositionally biased toward basic residues; it reads KTRKKKNKSDKFIIRRRKK.

This sequence belongs to the universal ribosomal protein uL2 family. Part of the 50S ribosomal subunit. Forms a bridge to the 30S subunit in the 70S ribosome.

Functionally, one of the primary rRNA binding proteins. Required for association of the 30S and 50S subunits to form the 70S ribosome, for tRNA binding and peptide bond formation. It has been suggested to have peptidyltransferase activity; this is somewhat controversial. Makes several contacts with the 16S rRNA in the 70S ribosome. The polypeptide is Large ribosomal subunit protein uL2 (Geobacillus stearothermophilus (Bacillus stearothermophilus)).